Consider the following 322-residue polypeptide: Phosphatidylserine decarboxylase proenzyme (322 aa).

Catalysis depends on charge relay system; for autoendoproteolytic cleavage activity residues aspartate 90, histidine 147, and serine 254. Residue serine 254 is the Schiff-base intermediate with substrate; via pyruvic acid; for decarboxylase activity of the active site. Serine 254 carries the pyruvic acid (Ser); by autocatalysis modification. The disordered stretch occupies residues 296-322; the sequence is EPAPLPAEEIKAEHDASPLVDNKKDDT. Basic and acidic residues predominate over residues 303–322; the sequence is EEIKAEHDASPLVDNKKDDT.

The protein belongs to the phosphatidylserine decarboxylase family. PSD-B subfamily. Prokaryotic type I sub-subfamily. As to quaternary structure, heterodimer of a large membrane-associated beta subunit and a small pyruvoyl-containing alpha subunit. Pyruvate serves as cofactor. Post-translationally, is synthesized initially as an inactive proenzyme. Formation of the active enzyme involves a self-maturation process in which the active site pyruvoyl group is generated from an internal serine residue via an autocatalytic post-translational modification. Two non-identical subunits are generated from the proenzyme in this reaction, and the pyruvate is formed at the N-terminus of the alpha chain, which is derived from the carboxyl end of the proenzyme. The autoendoproteolytic cleavage occurs by a canonical serine protease mechanism, in which the side chain hydroxyl group of the serine supplies its oxygen atom to form the C-terminus of the beta chain, while the remainder of the serine residue undergoes an oxidative deamination to produce ammonia and the pyruvoyl prosthetic group on the alpha chain. During this reaction, the Ser that is part of the protease active site of the proenzyme becomes the pyruvoyl prosthetic group, which constitutes an essential element of the active site of the mature decarboxylase.

It is found in the cell membrane. The catalysed reaction is a 1,2-diacyl-sn-glycero-3-phospho-L-serine + H(+) = a 1,2-diacyl-sn-glycero-3-phosphoethanolamine + CO2. The protein operates within phospholipid metabolism; phosphatidylethanolamine biosynthesis; phosphatidylethanolamine from CDP-diacylglycerol: step 2/2. In terms of biological role, catalyzes the formation of phosphatidylethanolamine (PtdEtn) from phosphatidylserine (PtdSer). The polypeptide is Phosphatidylserine decarboxylase proenzyme (Salmonella dublin (strain CT_02021853)).